Reading from the N-terminus, the 299-residue chain is Urease accessory protein UreD (299 aa).

The protein belongs to the UreD family. In terms of assembly, ureD, UreF and UreG form a complex that acts as a GTP-hydrolysis-dependent molecular chaperone, activating the urease apoprotein by helping to assemble the nickel containing metallocenter of UreC. The UreE protein probably delivers the nickel.

The protein localises to the cytoplasm. Its function is as follows. Required for maturation of urease via the functional incorporation of the urease nickel metallocenter. This Prochlorococcus marinus (strain MIT 9303) protein is Urease accessory protein UreD.